A 396-amino-acid polypeptide reads, in one-letter code: Probable sugar efflux transporter (396 aa).

12 helical membrane passes run 15-35 (VVTL…PVGL), 50-70 (VGIM…PFML), 81-101 (LICL…SWSF), 103-123 (VLVI…SITA), 136-156 (AQAL…GLPL), 170-190 (FFAI…LLPL), 209-229 (PALM…YTAY), 246-266 (FATA…VIFG), 275-295 (ALVS…LPAA), 299-319 (IHLG…GLGM), 333-353 (VAMA…ALVG), and 364-384 (MIGY…IIIF).

It belongs to the major facilitator superfamily. SotB (TC 2.A.1.2) family.

The protein resides in the cell inner membrane. Involved in the efflux of sugars. The physiological role may be the reduction of the intracellular concentration of toxic sugars or sugar metabolites. The polypeptide is Probable sugar efflux transporter (Escherichia coli O127:H6 (strain E2348/69 / EPEC)).